The chain runs to 182 residues: Inner membrane assembly complex subunit 17 (182 aa).

The N-terminal 45 residues, 1–45, are a transit peptide targeting the mitochondrion; sequence MLKRRSNALITLSRTKLFPITTVAYYHRRLLNQQRRAVSTSPKKE. Over 46-107 the chain is Mitochondrial matrix; sequence IKSLEDLANL…EIPVKRFIRP (62 aa). The chain crosses the membrane as a helical span at residues 108–127; the sequence is LWMFILMGSSVYLLLHFSWW. Positions 128–158 form a coiled coil; that stretch reads KLEHEERESQLKKEVEILEHQLNELIIQDKT. At 128–182 the chain is on the mitochondrial intermembrane side; it reads KLEHEERESQLKKEVEILEHQLNELIIQDKTHNTSRGKGSNESTHMKPWYRRWFW.

This sequence belongs to the INA17 family. Component of the inner membrane assembly (INA) complex, composed of INA17 and INA22. Interacts with a subset of F(1)F(0)-ATP synthase subunits of the F(1)-domain and the peripheral stalk.

Its subcellular location is the mitochondrion inner membrane. Functionally, component of the INA complex (INAC) that promotes the biogenesis of mitochondrial F(1)F(0)-ATP synthase. INAC facilitates the assembly of the peripheral stalk and promotes the assembly of the catalytic F(1)-domain with the membrane-embedded F(0)-domain. This Saccharomyces cerevisiae (strain YJM789) (Baker's yeast) protein is Inner membrane assembly complex subunit 17.